The primary structure comprises 498 residues: Polyphosphate:AMP phosphotransferase (498 aa).

PPK2 regions lie at residues 11–234 (IDDD…MQAA) and 269–491 (LSKE…LEKA).

The protein belongs to the polyphosphate kinase 2 (PPK2) family. Class II subfamily.

The enzyme catalyses [phosphate](n) + ADP = [phosphate](n+1) + AMP. Functionally, uses inorganic polyphosphate (polyP) as a donor to convert AMP to ADP. Can also convert GMP to GDP, with lower efficiency. The polypeptide is Polyphosphate:AMP phosphotransferase (Pseudomonas syringae pv. tomato (strain ATCC BAA-871 / DC3000)).